The following is an 850-amino-acid chain: Vacuolar membrane protease (850 aa).

At 1-20 (MASSRAQWFNPIAFTPWPVT) the chain is on the cytoplasmic side. Residues 21–41 (CITTIVYLALLIPILVINLVV) traverse the membrane as a helical segment. At 42-282 (PSAPETNPKG…DGKSKDQNKV (241 aa)) the chain is on the vacuolar side. Residues asparagine 53, asparagine 116, and asparagine 119 are each glycosylated (N-linked (GlcNAc...) asparagine). Zn(2+) is bound by residues histidine 175 and aspartate 187. The Proton acceptor role is filled by glutamate 221. A Zn(2+)-binding site is contributed by glutamate 222. Residues 283-303 (NSGTGTLGVWFDMFGTAFAVF) form a helical membrane-spanning segment. Topologically, residues 304–308 (RLHTL) are cytoplasmic. Residues 309 to 329 (FAISVALLVIAPLVIFVTSVI) form a helical membrane-spanning segment. The Vacuolar portion of the chain corresponds to 330 to 363 (LSKTDRMYLFSMSKSLEGTGDQVSLRGLRGFSRT). Residues 364–384 (PIILVIATTIPICLAYLLEKV) traverse the membrane as a helical segment. Over 385–393 (NPYIVHSSQ) the chain is Cytoplasmic. The chain crosses the membrane as a helical span at residues 394–414 (FSVWSMMFSAWIFLAWFLACA). The Vacuolar segment spans residues 415 to 425 (ADFFRPSALHR). The helical transmembrane segment at 426–446 (AYSYTWIFIATWIMLVINTVY) threads the bilayer. Over 447-529 (ANQKGIAAGP…TLPRWTWVLQ (83 aa)) the chain is Cytoplasmic. The chain crosses the membrane as a helical span at residues 530-550 (LLLLAPIVLILVGQLALFLTA). The Vacuolar segment spans residues 551–563 (SMCQVGSDGVSTF). The helical transmembrane segment at 564-584 (VVYLACSVFTTLLCIPLFPLI) threads the bilayer. Topologically, residues 585–590 (HRFTYH) are cytoplasmic. Residues 591-611 (IPTFLFLVFIGTLIYNLVAFP) form a helical membrane-spanning segment. The Vacuolar segment spans residues 612 to 850 (FSPANRLKTF…VEASHSFTIQ (239 aa)). Residues asparagine 630, asparagine 658, and asparagine 702 are each glycosylated (N-linked (GlcNAc...) asparagine).

Belongs to the peptidase M28 family. Zn(2+) is required as a cofactor.

It is found in the vacuole membrane. Its function is as follows. May be involved in vacuolar sorting and osmoregulation. The polypeptide is Vacuolar membrane protease (Ajellomyces capsulatus (strain NAm1 / WU24) (Darling's disease fungus)).